A 714-amino-acid polypeptide reads, in one-letter code: Cadherin-13 (714 aa).

Residues 1–22 (MQPRTPLTLCVLLSQVLLVTSA) form the signal peptide. Residues 23-138 (DDLECTPGFQ…RTSPVPRQKR (116 aa)) constitute a propeptide that is removed on maturation. 5 consecutive Cadherin domains span residues 143–245 (SPIL…RPIF), 246–363 (REGP…SPKF), 364–477 (TKKE…GPVF), 478–585 (YPDP…APVI), and 586–680 (YPTV…VQVC). Residues 156-183 (PRDVGKVVDSDRPEGSKFRLTGKGVDQD) form a disordered region. Basic and acidic residues predominate over residues 158-172 (DVGKVVDSDRPEGSK). N-linked (GlcNAc...) asparagine glycans are attached at residues asparagine 382, asparagine 489, asparagine 500, asparagine 530, asparagine 598, asparagine 638, and asparagine 671. A lipid anchor (GPI-anchor amidated glycine) is attached at glycine 693. Residues 694 to 714 (ALHLSLSLLLLFSLLSLLSGL) constitute a propeptide, removed in mature form.

In terms of assembly, by contrast to classical cadherins, homodimerization in trans is not mediated by cadherin EC1 domain strand-swapping, but instead through a homophilic adhesive interface which joins two elongated EC1-EC2 domains through a region near their Ca2+-binding sites to form a tetrahedral, X-like shape.

Its subcellular location is the cell membrane. It localises to the cytoplasm. In terms of biological role, cadherins are calcium-dependent cell adhesion proteins. They preferentially interact with themselves in a homophilic manner in connecting cells; cadherins may thus contribute to the sorting of heterogeneous cell types. May act as a negative regulator of neural cell growth. This chain is Cadherin-13 (Cdh13), found in Mus musculus (Mouse).